The primary structure comprises 577 residues: ABC transporter G family member 4 (577 aa).

Positions 6 to 248 (LSTSSISYAK…LLSKGFTVPS (243 aa)) constitute an ABC transporter domain. 48 to 55 (GPSGAGKS) serves as a coordination point for ATP. Residues 299–509 (TEISLLSSRF…ALDALLINEY (211 aa)) form the ABC transmembrane type-2 domain. A run of 7 helical transmembrane segments spans residues 318-338 (LLLT…TIYL), 353-373 (LFAF…PIFI), 400-420 (VFLP…YFLV), 429-449 (LAYF…FVLF), 458-478 (IAGT…SGYF), 487-507 (YWLF…LLIN), and 548-568 (FNVY…FLVL).

The protein belongs to the ABC transporter superfamily. ABCG family. Eye pigment precursor importer (TC 3.A.1.204) subfamily.

Its subcellular location is the membrane. This Arabidopsis thaliana (Mouse-ear cress) protein is ABC transporter G family member 4 (ABCG4).